The sequence spans 376 residues: 23S rRNA (uracil(747)-C(5))-methyltransferase RlmC (376 aa).

Residues cysteine 3, cysteine 11, cysteine 14, and cysteine 87 each contribute to the [4Fe-4S] cluster site. S-adenosyl-L-methionine is bound by residues glutamine 212, phenylalanine 241, glutamate 262, and asparagine 307. Catalysis depends on cysteine 334, which acts as the Nucleophile.

It belongs to the class I-like SAM-binding methyltransferase superfamily. RNA M5U methyltransferase family. RlmC subfamily.

It carries out the reaction uridine(747) in 23S rRNA + S-adenosyl-L-methionine = 5-methyluridine(747) in 23S rRNA + S-adenosyl-L-homocysteine + H(+). Catalyzes the formation of 5-methyl-uridine at position 747 (m5U747) in 23S rRNA. The sequence is that of 23S rRNA (uracil(747)-C(5))-methyltransferase RlmC from Salmonella choleraesuis (strain SC-B67).